Consider the following 508-residue polypeptide: MRASKANAYVAAIDQGTTSTRCIIIDDTGAVVSVAAKEHEQILPQQGWVEHDPVEIWDNVRAVVSQAMVAIDITPYEISSVGVTNQRETTVIWDPATGEPVYNAIVWQDTRTNEICRELAGEEGQQKWLDRTGLLINSYPAGPKIKWILDNVEGVRERAEKGELYFGTMDTWLLWNLTGGIRGDDGEEALHVTDVTNASRTLLMDIHTQQWDPELCEALDIPMSLLPEIKPSIGDYRSVRHRGILADVPITGVLGDQQAALFGQGGFKEGDTKNTYGTGLFLVMNTGPELKISEHGLLSTIAYQIEGQDPVYALEGSVSMGGSLVQWLRDSLQMIPTAPAIEEFARQVPDNGGVHIVPAFSGLFAPRWHPEARGVITGLTRFANRNHICRAVLEATAFQTREVVDAMARDAGKELESLRVDGAMVQNELLMQMQADILGIDVIRPGDIETTALGTAFAAGLGSGFFKDFDQIIELISIRQTWTPEMTEAERERAYDAWNEAVTHAYPR.

Threonine 17 is an ADP binding site. ATP-binding residues include threonine 17, threonine 18, and serine 19. Residue threonine 17 participates in sn-glycerol 3-phosphate binding. Arginine 21 contributes to the ADP binding site. The sn-glycerol 3-phosphate site is built by arginine 87, glutamate 88, tyrosine 139, and aspartate 256. 5 residues coordinate glycerol: arginine 87, glutamate 88, tyrosine 139, aspartate 256, and glutamine 257. Residues threonine 278 and glycine 322 each contribute to the ADP site. Residues threonine 278, glycine 322, glutamine 326, and alanine 423 each contribute to the ATP site. The ADP site is built by alanine 423 and asparagine 427.

It belongs to the FGGY kinase family.

The enzyme catalyses glycerol + ATP = sn-glycerol 3-phosphate + ADP + H(+). Its pathway is polyol metabolism; glycerol degradation via glycerol kinase pathway; sn-glycerol 3-phosphate from glycerol: step 1/1. With respect to regulation, inhibited by fructose 1,6-bisphosphate (FBP). In terms of biological role, key enzyme in the regulation of glycerol uptake and metabolism. Catalyzes the phosphorylation of glycerol to yield sn-glycerol 3-phosphate. This chain is Glycerol kinase, found in Corynebacterium efficiens (strain DSM 44549 / YS-314 / AJ 12310 / JCM 11189 / NBRC 100395).